We begin with the raw amino-acid sequence, 297 residues long: Protoheme IX farnesyltransferase (297 aa).

A run of 9 helical transmembrane segments spans residues 23-43, 49-69, 93-113, 117-137, 144-164, 171-191, 215-235, 238-258, and 275-295; these read VTQLAVFCAVIGMFLAAPGMP, VFGTLGIWLLAAAAFAINCLI, IQVLSLSGLLGGAGMLVLYHL, LTMWLTFATFVGYAIIYTVIL, NIVIGGLSGAMPPALGWAAVA, AWVLVLIIFIWTPPHFWALAL, RLHILLYSFALLATTLLPYAI, SGALYLASALALGGMFVWYAW, and FSILYLALLFGALLIDHWVGL.

This sequence belongs to the UbiA prenyltransferase family. Protoheme IX farnesyltransferase subfamily.

It is found in the cell inner membrane. The catalysed reaction is heme b + (2E,6E)-farnesyl diphosphate + H2O = Fe(II)-heme o + diphosphate. The protein operates within porphyrin-containing compound metabolism; heme O biosynthesis; heme O from protoheme: step 1/1. Its function is as follows. Converts heme B (protoheme IX) to heme O by substitution of the vinyl group on carbon 2 of heme B porphyrin ring with a hydroxyethyl farnesyl side group. This Bordetella pertussis (strain Tohama I / ATCC BAA-589 / NCTC 13251) protein is Protoheme IX farnesyltransferase.